The primary structure comprises 164 residues: 5-formyltetrahydrofolate cyclo-ligase (164 aa).

3-7 is an ATP binding site; the sequence is KNALR. Substrate is bound by residues glutamate 50 and glutamate 55. 115 to 123 is an ATP binding site; that stretch reads RLGFGKGYY. Aspartate 124 is a binding site for Mg(2+). The ATP site is built by arginine 125 and tryptophan 153. Position 154 (aspartate 154) interacts with Mg(2+).

It belongs to the 5-formyltetrahydrofolate cyclo-ligase family. Monomer or homodimer. Mg(2+) serves as cofactor. The cofactor is Mn(2+). Ca(2+) is required as a cofactor. Requires Zn(2+) as cofactor. It depends on Fe(2+) as a cofactor. Co(2+) serves as cofactor. The cofactor is Cu(2+).

The protein resides in the cytoplasm. The enzyme catalyses (6S)-5-formyl-5,6,7,8-tetrahydrofolate + ATP = (6R)-5,10-methenyltetrahydrofolate + ADP + phosphate. In terms of biological role, involved in folate metabolism. Catalyzes the irreversible conversion of 5-formyltetrahydrofolate (5-FTHF) to yield 5,10-methenyltetrahydrofolate. This chain is 5-formyltetrahydrofolate cyclo-ligase, found in Mycoplasma pneumoniae (strain ATCC 29342 / M129 / Subtype 1) (Mycoplasmoides pneumoniae).